The sequence spans 318 residues: Pyrimidine-specific ribonucleoside hydrolase RihA (318 aa).

Residue histidine 240 is part of the active site.

It belongs to the IUNH family. RihA subfamily.

Functionally, hydrolyzes cytidine or uridine to ribose and cytosine or uracil, respectively. This is Pyrimidine-specific ribonucleoside hydrolase RihA from Shewanella sp. (strain MR-4).